A 754-amino-acid chain; its full sequence is Disintegrin and metalloproteinase domain-containing protein 7 (754 aa).

Residues 1 to 18 (MLPGCIFLMILLIPQVKE) form the signal peptide. Positions 19–176 (KFILGVEGQQ…NYSCTELNFT (158 aa)) are excised as a propeptide. Topologically, residues 19–668 (KFILGVEGQQ…ACEETLHVTN (650 aa)) are extracellular. N-linked (GlcNAc...) asparagine glycans are attached at residues asparagine 84, asparagine 167, asparagine 174, and asparagine 184. The Peptidase M12B domain maps to 199–394 (KYVELFIVAD…YKPTCMLNIP (196 aa)). 4 cysteine pairs are disulfide-bonded: cysteine 310-cysteine 389, cysteine 350-cysteine 373, cysteine 352-cysteine 357, and cysteine 460-cysteine 480. One can recognise a Disintegrin domain in the interval 402 to 488 (FQFCGNKKLD…ACPKDQFRVN (87 aa)). 2 N-linked (GlcNAc...) asparagine glycosylation sites follow: asparagine 584 and asparagine 668. Residues 669–689 (ITILVVVLVLVIVGIGVLILL) form a helical membrane-spanning segment. The Cytoplasmic portion of the chain corresponds to 690 to 754 (VRYRKCIKLK…GIADPNQSAK (65 aa)).

In terms of assembly, interacts with ITM2B in sperm; the interaction increases following capacitation. Interacts with HSPA5 and CANX.

It is found in the membrane. Required for normal male fertility via maintenance of epithelial cell morphology in the caput epididymis and subsequently correct epididymis lumen structure required for sperm development. Plays a role in sperm motility, flagella morphology and tyrosine phosphorylation during sperm capacitance. Plays a role in normal expression levels of HSPA5, ITM2B and ADAM2 in sperm both prior to and post-capacitation. This is a non catalytic metalloprotease-like protein. In Homo sapiens (Human), this protein is Disintegrin and metalloproteinase domain-containing protein 7.